A 517-amino-acid polypeptide reads, in one-letter code: Protein IQ-DOMAIN 13 (517 aa).

The calmodulin-binding stretch occupies residues 1–11 (MGKKGSWFSAI). 2 disordered regions span residues 1 to 60 (MGKK…FLPI) and 81 to 147 (VFRP…PRAV). Basic residues predominate over residues 40–49 (KKKKGFGKKL). Polar residues predominate over residues 89-99 (DRANSSSTSVA). A compositionally biased stretch (pro residues) spans 134–144 (PKPPSPKPPSP). IQ domains are found at residues 168–196 (KNAY…GLVR) and 197–218 (LQGV…KYMQ). Disordered stretches follow at residues 324 to 407 (QPFR…LTSC) and 425 to 452 (KLRA…SSFP). Positions 328-342 (LTPTRPSLSPQPQSS) are enriched in low complexity. The segment covering 343–367 (NQNHFRLNNSFDTSTPNSSKSTFVT) has biased composition (polar residues). The segment covering 432–448 (PKERMDRTPVSTNEKRR) has biased composition (basic and acidic residues).

This sequence belongs to the IQD family. In terms of assembly, binds to multiple calmodulin (CaM) in the presence of Ca(2+) and CaM-like proteins. In terms of tissue distribution, expressed in vessels of roots, cotyledons and leaves, as well as in trichomes.

It localises to the cell membrane. Its subcellular location is the cytoplasm. The protein resides in the cytoskeleton. May be involved in cooperative interactions with calmodulins or calmodulin-like proteins. Recruits calmodulin proteins to microtubules, thus being a potential scaffold in cellular signaling and trafficking. Regulates the formation of oval xylem secondary cell-wall deposition pits through microtubule-dependent lateral inhibition of Rho GTPase domains, thus confining the area of active ROP domains within the lattice of the cortical microtubules. May associate with nucleic acids and regulate gene expression at the transcriptional or post-transcriptional level. The sequence is that of Protein IQ-DOMAIN 13 from Arabidopsis thaliana (Mouse-ear cress).